Consider the following 493-residue polypeptide: 3-octaprenyl-4-hydroxybenzoate carboxy-lyase (493 aa).

A Mn(2+)-binding site is contributed by Asn-172. Residues 175-177 (IYR), 189-191 (RWL), and 194-195 (RG) each bind prenylated FMN. Glu-238 is a Mn(2+) binding site. The Proton donor role is filled by Asp-287.

It belongs to the UbiD family. Homohexamer. Prenylated FMN serves as cofactor. The cofactor is Mn(2+).

It localises to the cell membrane. It carries out the reaction a 4-hydroxy-3-(all-trans-polyprenyl)benzoate + H(+) = a 2-(all-trans-polyprenyl)phenol + CO2. Its pathway is cofactor biosynthesis; ubiquinone biosynthesis. In terms of biological role, catalyzes the decarboxylation of 3-octaprenyl-4-hydroxy benzoate to 2-octaprenylphenol, an intermediate step in ubiquinone biosynthesis. This is 3-octaprenyl-4-hydroxybenzoate carboxy-lyase from Shewanella pealeana (strain ATCC 700345 / ANG-SQ1).